Here is a 272-residue protein sequence, read N- to C-terminus: tRNA pseudouridine synthase A (272 aa).

The active-site Nucleophile is the aspartate 52. Substrate is bound at residue tyrosine 110.

The protein belongs to the tRNA pseudouridine synthase TruA family. Homodimer.

It carries out the reaction uridine(38/39/40) in tRNA = pseudouridine(38/39/40) in tRNA. In terms of biological role, formation of pseudouridine at positions 38, 39 and 40 in the anticodon stem and loop of transfer RNAs. The sequence is that of tRNA pseudouridine synthase A from Cupriavidus taiwanensis (strain DSM 17343 / BCRC 17206 / CCUG 44338 / CIP 107171 / LMG 19424 / R1) (Ralstonia taiwanensis (strain LMG 19424)).